A 214-amino-acid polypeptide reads, in one-letter code: MRIILLGAPGAGKGTQAQFIMAKFGIPQISTGDMLRAAIKAGTELGKQAKSVIDAGQLVSDDIILGLVKERIAQDDCAKGFLLDGFPRTIPQADGLKEVGVVVDYVIEFDVADSVIVERMAGRRAHLASGRTYHNVYNPPKVEGKDDVTGEDLVIREDDKEETVLARLGVYHNQTAPLIAYYGKEAEAGNTQYLKFDGTKAVAEVSAELEKALA.

An ATP-binding site is contributed by 10-15 (GAGKGT). Positions 30 to 59 (STGDMLRAAIKAGTELGKQAKSVIDAGQLV) are NMP. AMP-binding positions include threonine 31, arginine 36, 57-59 (QLV), 85-88 (GFPR), and glutamine 92. Residues 122-159 (GRRAHLASGRTYHNVYNPPKVEGKDDVTGEDLVIREDD) form an LID region. ATP contacts are provided by residues arginine 123 and 132–133 (TY). The AMP site is built by arginine 156 and arginine 167. Residue lysine 200 coordinates ATP.

This sequence belongs to the adenylate kinase family. Monomer.

It is found in the cytoplasm. It catalyses the reaction AMP + ATP = 2 ADP. It participates in purine metabolism; AMP biosynthesis via salvage pathway; AMP from ADP: step 1/1. Functionally, catalyzes the reversible transfer of the terminal phosphate group between ATP and AMP. Plays an important role in cellular energy homeostasis and in adenine nucleotide metabolism. The protein is Adenylate kinase of Photobacterium profundum (strain SS9).